Consider the following 148-residue polypeptide: 3-dehydroquinate dehydratase (148 aa).

Y23 serves as the catalytic Proton acceptor. Residues N74, H80, and D87 each coordinate substrate. H100 acts as the Proton donor in catalysis. Substrate-binding positions include 101-102 and R111; that span reads IS.

This sequence belongs to the type-II 3-dehydroquinase family. As to quaternary structure, homododecamer.

It carries out the reaction 3-dehydroquinate = 3-dehydroshikimate + H2O. Its pathway is metabolic intermediate biosynthesis; chorismate biosynthesis; chorismate from D-erythrose 4-phosphate and phosphoenolpyruvate: step 3/7. Its function is as follows. Catalyzes a trans-dehydration via an enolate intermediate. This is 3-dehydroquinate dehydratase from Caldanaerobacter subterraneus subsp. tengcongensis (strain DSM 15242 / JCM 11007 / NBRC 100824 / MB4) (Thermoanaerobacter tengcongensis).